The following is a 1013-amino-acid chain: MPRSSATARKSHSNRHDNGVVGSGKKVSKQKSNGHLNGNHANSSTPTSGPSSQVDWPSSRSNSDTAIPTTAAAAARLNGATENSKDIRGHLNGYAKGTSDMSYGQANGAVPQNGCLPGDAARRTEKPATASKRSGSSASVNPLHLASTILKSCPMYDTIAILIFLLQLPPMVLTLVQFLFASLTFMPPSGASAGSLTSNFDIFQGPAGTPSLGTMIAMDGFCLLFWGLFMWTWAQNFALDLAHVQVAITLGGGGSGKNGGVNALCVGIVLVLHLIRSKGIQDFVMGHLLSAKIISPDLLSQYSHLIPAEFRRTEPQSSPSWIRSLLAVHILAQAGTAMARRSMAKNRAPAPPRTGKRIDTEASAGSQTQFDSAFESGASMSSYIGPDGQFITPATHKDGRDRLISAKKRRRQANQVRSRQPFWAALASTKVTVMREYEHSRALSKTARGLTMTEDDLQGVSLDDGLVWITDVDSSTIRFAAGDFSSPDDASGSGVCETGRLSDDMEPFYVCVNGAQWATATISKVPDARKGTSAVHWRGEISGLAPNCAYTCSFMRSDTDEEICAMSVKTPATSDAEQVSSISAPPQPTYRPSSPTTTLKNSIINAEAKLNEKRSRMKKAKNDHKLVVSKIRKELENYNHRLHSGTDENRQKQRSLQLERNIKQTEEATAALGEQLDNLENIPEEELEEWTMQKAKYERELELLNSVKEELIAARSAVAREVSSLESELNSTVQRRERLQGRRTRVNEQYERIISANAQGLNERERRAAEQFAREQDQAKLEANFNEQLASITQSIQEYQLRTNQLWQQSAAIEQAIQQQQQQMLMDSAPLTPEGNLPGTNPLGDTPSLALAGLTTSAPSSRSLLGLNFPPLKSSPLQHASSLVGATSSHPASPTQTPSYLQHFPTSPLANASSPFDPDFVYRDRSFSNRSGRSSLYGFDLIDSSRRAPFQFDLSEAASEKRRSSGSESNGPNLGLRPISSPFPRAGSRASGSGSGGSGSGSGSPSSAAGKGI.

Disordered regions lie at residues 1–65 (MPRS…NSDT) and 104–139 (GQAN…SSAS). Residues 33 to 64 (NGHLNGNHANSSTPTSGPSSQVDWPSSRSNSD) show a composition bias toward polar residues. The next 3 membrane-spanning stretches (helical) occupy residues 159-179 (IAIL…VQFL), 212-232 (LGTM…FMWT), and 255-275 (SGKN…LHLI). Disordered stretches follow at residues 342–367 (SMAK…AGSQ), 574–599 (SDAE…TTTL), 878–906 (QHAS…HFPT), and 954–1013 (LSEA…GKGI). Residues 597-806 (TTLKNSIINA…QEYQLRTNQL (210 aa)) adopt a coiled-coil conformation. Residues 993-1002 (SGSGGSGSGS) are compositionally biased toward gly residues. The span at 1003–1013 (GSPSSAAGKGI) shows a compositional bias: low complexity.

The protein belongs to the acrB family.

The protein localises to the membrane. Functionally, component of the regulatory network controlling carbon source utilization through ubiquitination and deubiquitination involving creA, creB, creC, creD and acrB. Involved in resistance to acriflavine, and required for normal growth on a range of sole carbon sources, including fructose, cellobiose, raffinose, and starch, and reduced utilization of amino acids, including GABA and beta-alanine, as sole carbon and nitrogen sources. The sequence is that of Probable ubiquitination network signaling protein acrB (acrB) from Aspergillus terreus (strain NIH 2624 / FGSC A1156).